A 199-amino-acid chain; its full sequence is Large ribosomal subunit protein uL13A (199 aa).

An N-acetylserine modification is found at serine 2. Lysine 177 is covalently cross-linked (Glycyl lysine isopeptide (Lys-Gly) (interchain with G-Cter in ubiquitin)).

This sequence belongs to the universal ribosomal protein uL13 family. As to quaternary structure, component of the large ribosomal subunit (LSU). Mature yeast ribosomes consist of a small (40S) and a large (60S) subunit. The 40S small subunit contains 1 molecule of ribosomal RNA (18S rRNA) and 33 different proteins (encoded by 57 genes). The large 60S subunit contains 3 rRNA molecules (25S, 5.8S and 5S rRNA) and 46 different proteins (encoded by 81 genes). N-terminally acetylated by acetyltransferase NatA.

The protein localises to the cytoplasm. In terms of biological role, component of the ribosome, a large ribonucleoprotein complex responsible for the synthesis of proteins in the cell. The small ribosomal subunit (SSU) binds messenger RNAs (mRNAs) and translates the encoded message by selecting cognate aminoacyl-transfer RNA (tRNA) molecules. The large subunit (LSU) contains the ribosomal catalytic site termed the peptidyl transferase center (PTC), which catalyzes the formation of peptide bonds, thereby polymerizing the amino acids delivered by tRNAs into a polypeptide chain. The nascent polypeptides leave the ribosome through a tunnel in the LSU and interact with protein factors that function in enzymatic processing, targeting, and the membrane insertion of nascent chains at the exit of the ribosomal tunnel. This Saccharomyces cerevisiae (strain ATCC 204508 / S288c) (Baker's yeast) protein is Large ribosomal subunit protein uL13A.